Reading from the N-terminus, the 211-residue chain is Imidazole glycerol phosphate synthase subunit HisH (211 aa).

In terms of domain architecture, Glutamine amidotransferase type-1 spans 1–211; that stretch reads MIGIIDYGMG…ASIIEGKGSM (211 aa). Cys-79 (nucleophile) is an active-site residue. Catalysis depends on residues His-186 and Glu-188.

As to quaternary structure, heterodimer of HisH and HisF.

It localises to the cytoplasm. The enzyme catalyses 5-[(5-phospho-1-deoxy-D-ribulos-1-ylimino)methylamino]-1-(5-phospho-beta-D-ribosyl)imidazole-4-carboxamide + L-glutamine = D-erythro-1-(imidazol-4-yl)glycerol 3-phosphate + 5-amino-1-(5-phospho-beta-D-ribosyl)imidazole-4-carboxamide + L-glutamate + H(+). It catalyses the reaction L-glutamine + H2O = L-glutamate + NH4(+). It functions in the pathway amino-acid biosynthesis; L-histidine biosynthesis; L-histidine from 5-phospho-alpha-D-ribose 1-diphosphate: step 5/9. Functionally, IGPS catalyzes the conversion of PRFAR and glutamine to IGP, AICAR and glutamate. The HisH subunit catalyzes the hydrolysis of glutamine to glutamate and ammonia as part of the synthesis of IGP and AICAR. The resulting ammonia molecule is channeled to the active site of HisF. This is Imidazole glycerol phosphate synthase subunit HisH from Geobacillus sp. (strain WCH70).